A 1109-amino-acid polypeptide reads, in one-letter code: Cation channel sperm-associated auxiliary subunit beta (1109 aa).

The Extracellular segment spans residues 1 to 1055 (MESPLIYVML…QIYVDEVPLP (1055 aa)). C35 and C60 are oxidised to a cystine. N-linked (GlcNAc...) asparagine glycans are attached at residues N66, N90, and N118. A disulfide bridge links C189 with C302. A glycan (N-linked (GlcNAc...) asparagine) is linked at N321. C330 and C343 are oxidised to a cystine. The N-linked (GlcNAc...) asparagine glycan is linked to N672. Intrachain disulfides connect C720–C818, C831–C1039, C913–C922, and C924–C939. Residues N915 and N923 are each glycosylated (N-linked (GlcNAc...) asparagine). N1017 carries N-linked (GlcNAc...) asparagine glycosylation. Residues 1056 to 1078 (FPGHALIAVATSVVLGVLIFIAF) form a helical membrane-spanning segment. At 1079 to 1109 (VFQLRNIHPLKALKKSIRGNPGLTSSTTVSS) the chain is on the cytoplasmic side.

As to quaternary structure, component of the CatSper complex or CatSpermasome composed of the core pore-forming members CATSPER1, CATSPER2, CATSPER3 and CATSPER4 as well as auxiliary members CATSPERB, CATSPERG2, CATSPERD, CATSPERE, CATSPERZ, C2CD6/CATSPERT, SLCO6C1, TMEM249, TMEM262 and EFCAB9. HSPA1 may be an additional auxiliary complex member. The core complex members CATSPER1, CATSPER2, CATSPER3 and CATSPER4 form a heterotetrameric channel. The auxiliary CATSPERB, CATSPERG2, CATSPERD and CATSPERE subunits form a pavilion-like structure over the pore which stabilizes the complex through interactions with CATSPER4, CATSPER3, CATSPER1 and CATSPER2 respectively. SLCO6C1 interacts with CATSPERE and TMEM262/CATSPERH interacts with CATSPERB, further stabilizing the complex. C2CD6/CATSPERT interacts at least with CATSPERD and is required for targeting the CatSper complex in the flagellar membrane. Testis-specific. Specifically present in the principal piece of sperm tail (at protein level). Specifically expressed in the seminiferous tubules but not in the interstitial cells. Within the tubules, it is expressed in spermatocytes and spermatids, but not in spermatogonia.

The protein resides in the cell projection. It is found in the cilium. It localises to the flagellum membrane. Functionally, auxiliary component of the CatSper complex, a complex involved in sperm cell hyperactivation. Sperm cell hyperactivation is needed for sperm motility which is essential late in the preparation of sperm for fertilization. The polypeptide is Cation channel sperm-associated auxiliary subunit beta (Mus musculus (Mouse)).